The primary structure comprises 469 residues: Glutamine synthetase (469 aa).

The 85-residue stretch at 13–97 folds into the GS beta-grasp domain; that stretch reads KEVRYVDLRF…LRCDIVEPAT (85 aa). Positions 105-469 constitute a GS catalytic domain; the sequence is PRSIAKRAEA…PVEFDMYYSL (365 aa). Mg(2+) contacts are provided by Glu130 and Glu132. Glu208 contributes to the ATP binding site. Residues Glu213 and Glu221 each coordinate Mg(2+). Residues 265-266 and Gly266 contribute to the L-glutamate site; that span reads NG. A Mg(2+)-binding site is contributed by His270. ATP contacts are provided by residues 272–274 and Ser274; that span reads HQS. 3 residues coordinate L-glutamate: Arg322, Glu328, and Arg340. ATP is bound by residues Arg340, Arg345, and Lys353. Glu358 is a binding site for Mg(2+). Arg360 lines the L-glutamate pocket. Tyr398 bears the O-AMP-tyrosine mark.

Belongs to the glutamine synthetase family. Oligomer of 12 subunits arranged in the form of two hexameric ring. The cofactor is Mg(2+).

The protein localises to the cytoplasm. It carries out the reaction L-glutamate + NH4(+) + ATP = L-glutamine + ADP + phosphate + H(+). The activity of this enzyme could be controlled by adenylation under conditions of abundant glutamine. Functionally, catalyzes the ATP-dependent biosynthesis of glutamine from glutamate and ammonia. The chain is Glutamine synthetase from Methylococcus capsulatus (strain ATCC 33009 / NCIMB 11132 / Bath).